We begin with the raw amino-acid sequence, 122 residues long: Large ribosomal subunit protein bL12 (122 aa).

The disordered stretch occupies residues 94-122 (GNVKEGLSKEDAEEMKEKLEEAGATVELK). Residues 99 to 114 (GLSKEDAEEMKEKLEE) are compositionally biased toward basic and acidic residues.

Belongs to the bacterial ribosomal protein bL12 family. As to quaternary structure, homodimer. Part of the ribosomal stalk of the 50S ribosomal subunit. Forms a multimeric L10(L12)X complex, where L10 forms an elongated spine to which 2 to 4 L12 dimers bind in a sequential fashion. Binds GTP-bound translation factors.

Forms part of the ribosomal stalk which helps the ribosome interact with GTP-bound translation factors. Is thus essential for accurate translation. The protein is Large ribosomal subunit protein bL12 of Halanaerobium praevalens.